Reading from the N-terminus, the 208-residue chain is Protein GrpE (208 aa).

Over residues 1–25 (MVDNKDFNEELKESIQEELDNETKS) the composition is skewed to basic and acidic residues. The interval 1-38 (MVDNKDFNEELKESIQEELDNETKSENPNIDEEVEEVS) is disordered. Residues 29-38 (NIDEEVEEVS) show a composition bias toward acidic residues.

The protein belongs to the GrpE family. Homodimer.

The protein localises to the cytoplasm. Functionally, participates actively in the response to hyperosmotic and heat shock by preventing the aggregation of stress-denatured proteins, in association with DnaK and GrpE. It is the nucleotide exchange factor for DnaK and may function as a thermosensor. Unfolded proteins bind initially to DnaJ; upon interaction with the DnaJ-bound protein, DnaK hydrolyzes its bound ATP, resulting in the formation of a stable complex. GrpE releases ADP from DnaK; ATP binding to DnaK triggers the release of the substrate protein, thus completing the reaction cycle. Several rounds of ATP-dependent interactions between DnaJ, DnaK and GrpE are required for fully efficient folding. The sequence is that of Protein GrpE from Clostridium perfringens (strain SM101 / Type A).